We begin with the raw amino-acid sequence, 255 residues long: Thiazole synthase (255 aa).

K96 (schiff-base intermediate with DXP) is an active-site residue. 1-deoxy-D-xylulose 5-phosphate contacts are provided by residues G157, 183-184 (AG), and 205-206 (NT).

Belongs to the ThiG family. Homotetramer. Forms heterodimers with either ThiH or ThiS.

Its subcellular location is the cytoplasm. The enzyme catalyses [ThiS sulfur-carrier protein]-C-terminal-Gly-aminoethanethioate + 2-iminoacetate + 1-deoxy-D-xylulose 5-phosphate = [ThiS sulfur-carrier protein]-C-terminal Gly-Gly + 2-[(2R,5Z)-2-carboxy-4-methylthiazol-5(2H)-ylidene]ethyl phosphate + 2 H2O + H(+). Its pathway is cofactor biosynthesis; thiamine diphosphate biosynthesis. In terms of biological role, catalyzes the rearrangement of 1-deoxy-D-xylulose 5-phosphate (DXP) to produce the thiazole phosphate moiety of thiamine. Sulfur is provided by the thiocarboxylate moiety of the carrier protein ThiS. In vitro, sulfur can be provided by H(2)S. The protein is Thiazole synthase of Staphylococcus haemolyticus (strain JCSC1435).